We begin with the raw amino-acid sequence, 340 residues long: L-threonine 3-dehydrogenase (340 aa).

A Zn(2+)-binding site is contributed by Cys38. Catalysis depends on charge relay system residues Thr40 and His43. Zn(2+)-binding residues include His63, Glu64, Cys93, Cys96, Cys99, and Cys107. NAD(+) is bound by residues Ile175, Asp195, Arg200, 262 to 264, and 286 to 287; these read LGI and IY.

It belongs to the zinc-containing alcohol dehydrogenase family. As to quaternary structure, homotetramer. Zn(2+) is required as a cofactor.

It localises to the cytoplasm. The catalysed reaction is L-threonine + NAD(+) = (2S)-2-amino-3-oxobutanoate + NADH + H(+). It functions in the pathway amino-acid degradation; L-threonine degradation via oxydo-reductase pathway; glycine from L-threonine: step 1/2. Functionally, catalyzes the NAD(+)-dependent oxidation of L-threonine to 2-amino-3-ketobutyrate. This is L-threonine 3-dehydrogenase from Legionella pneumophila (strain Corby).